The primary structure comprises 319 residues: Acetyl-coenzyme A carboxylase carboxyl transferase subunit alpha (319 aa).

Residues 35 to 296 form the CoA carboxyltransferase C-terminal domain; that stretch reads NIDEEVHRLR…KAQLLEDLAD (262 aa).

Belongs to the AccA family. As to quaternary structure, acetyl-CoA carboxylase is a heterohexamer composed of biotin carboxyl carrier protein (AccB), biotin carboxylase (AccC) and two subunits each of ACCase subunit alpha (AccA) and ACCase subunit beta (AccD).

The protein resides in the cytoplasm. The catalysed reaction is N(6)-carboxybiotinyl-L-lysyl-[protein] + acetyl-CoA = N(6)-biotinyl-L-lysyl-[protein] + malonyl-CoA. It functions in the pathway lipid metabolism; malonyl-CoA biosynthesis; malonyl-CoA from acetyl-CoA: step 1/1. Its function is as follows. Component of the acetyl coenzyme A carboxylase (ACC) complex. First, biotin carboxylase catalyzes the carboxylation of biotin on its carrier protein (BCCP) and then the CO(2) group is transferred by the carboxyltransferase to acetyl-CoA to form malonyl-CoA. The chain is Acetyl-coenzyme A carboxylase carboxyl transferase subunit alpha from Salmonella arizonae (strain ATCC BAA-731 / CDC346-86 / RSK2980).